A 151-amino-acid chain; its full sequence is D-ribose pyranase 1 (151 aa).

Residue His20 is the Proton donor of the active site. Substrate contacts are provided by residues Asp28, His98, and 121 to 123; that span reads WGN.

The protein belongs to the RbsD / FucU family. RbsD subfamily. Homodecamer.

It localises to the cytoplasm. It catalyses the reaction beta-D-ribopyranose = beta-D-ribofuranose. Its pathway is carbohydrate metabolism; D-ribose degradation; D-ribose 5-phosphate from beta-D-ribopyranose: step 1/2. Functionally, catalyzes the interconversion of beta-pyran and beta-furan forms of D-ribose. The chain is D-ribose pyranase 1 from Streptomyces griseus subsp. griseus (strain JCM 4626 / CBS 651.72 / NBRC 13350 / KCC S-0626 / ISP 5235).